Here is a 273-residue protein sequence, read N- to C-terminus: Formamidopyrimidine-DNA glycosylase (273 aa).

The active-site Schiff-base intermediate with DNA is the Pro2. The active-site Proton donor is Glu3. Lys57 (proton donor; for beta-elimination activity) is an active-site residue. DNA-binding residues include His91, Arg110, and Lys151. The FPG-type zinc finger occupies 236-270; the sequence is QVYGRKGEACNDCGTIIEAKVIGQRNSYFCPHCQI. The active-site Proton donor; for delta-elimination activity is Arg260.

It belongs to the FPG family. In terms of assembly, monomer. The cofactor is Zn(2+).

The enzyme catalyses Hydrolysis of DNA containing ring-opened 7-methylguanine residues, releasing 2,6-diamino-4-hydroxy-5-(N-methyl)formamidopyrimidine.. The catalysed reaction is 2'-deoxyribonucleotide-(2'-deoxyribose 5'-phosphate)-2'-deoxyribonucleotide-DNA = a 3'-end 2'-deoxyribonucleotide-(2,3-dehydro-2,3-deoxyribose 5'-phosphate)-DNA + a 5'-end 5'-phospho-2'-deoxyribonucleoside-DNA + H(+). Its function is as follows. Involved in base excision repair of DNA damaged by oxidation or by mutagenic agents. Acts as a DNA glycosylase that recognizes and removes damaged bases. Has a preference for oxidized purines, such as 7,8-dihydro-8-oxoguanine (8-oxoG). Has AP (apurinic/apyrimidinic) lyase activity and introduces nicks in the DNA strand. Cleaves the DNA backbone by beta-delta elimination to generate a single-strand break at the site of the removed base with both 3'- and 5'-phosphates. This is Formamidopyrimidine-DNA glycosylase from Actinobacillus pleuropneumoniae serotype 7 (strain AP76).